The primary structure comprises 440 residues: Golgi-associated RAB2 interactor protein 2 (440 aa).

Belongs to the GARIN family. In terms of assembly, interacts with CALM1. As to expression, expressed in testis (at protein level).

The protein localises to the cell projection. It is found in the cilium. It localises to the flagellum. In terms of biological role, seems to play a role in sperm motility. The polypeptide is Golgi-associated RAB2 interactor protein 2 (Mus musculus (Mouse)).